Consider the following 385-residue polypeptide: Phospho-N-acetylmuramoyl-pentapeptide-transferase (385 aa).

10 helical membrane-spanning segments follow: residues 23–43 (FITV…LGAG), 79–99 (MGGI…GAVA), 103–123 (VWLS…DDYV), 135–155 (AWYK…VLYF), 186–206 (LGVD…VTAV), 218–238 (GLTT…VYVS), 258–278 (LTVF…YNGY), 282–302 (VFMG…TILM), 307–327 (LLLP…IVQT), and 362–382 (KIVT…LLIL).

The protein belongs to the glycosyltransferase 4 family. MraY subfamily. Mg(2+) is required as a cofactor.

It is found in the cell inner membrane. The enzyme catalyses UDP-N-acetyl-alpha-D-muramoyl-L-alanyl-gamma-D-glutamyl-meso-2,6-diaminopimeloyl-D-alanyl-D-alanine + di-trans,octa-cis-undecaprenyl phosphate = di-trans,octa-cis-undecaprenyl diphospho-N-acetyl-alpha-D-muramoyl-L-alanyl-D-glutamyl-meso-2,6-diaminopimeloyl-D-alanyl-D-alanine + UMP. It functions in the pathway cell wall biogenesis; peptidoglycan biosynthesis. Catalyzes the initial step of the lipid cycle reactions in the biosynthesis of the cell wall peptidoglycan: transfers peptidoglycan precursor phospho-MurNAc-pentapeptide from UDP-MurNAc-pentapeptide onto the lipid carrier undecaprenyl phosphate, yielding undecaprenyl-pyrophosphoryl-MurNAc-pentapeptide, known as lipid I. This Salinibacter ruber (strain DSM 13855 / M31) protein is Phospho-N-acetylmuramoyl-pentapeptide-transferase.